Reading from the N-terminus, the 531-residue chain is Putative heme-binding protein HQ_1094A (531 aa).

H177 serves as a coordination point for heme. The interval 269–340 (AHGEAHGHAH…STNTNTQDSE (72 aa)) is disordered. The segment covering 271 to 281 (GEAHGHAHGDS) has biased composition (basic and acidic residues). The segment covering 284-306 (GSGGGGGSSHGQSPGGASAGGSA) has biased composition (gly residues). Residues 308-317 (GTEDADHSDS) show a composition bias toward basic and acidic residues. The span at 318-338 (RSTTSADTTQSDTSTNTNTQD) shows a compositional bias: low complexity. In terms of domain architecture, ABM spans 441–529 (GTMGMFYTVK…VLSERPRHVF (89 aa)).

It in the N-terminal section; belongs to the ChdC family.

The polypeptide is Putative heme-binding protein HQ_1094A (Haloquadratum walsbyi (strain DSM 16790 / HBSQ001)).